A 329-amino-acid polypeptide reads, in one-letter code: Cytosolic arginine sensor for mTORC1 subunit 2 (329 aa).

ACT domains follow at residues A72–L139 and E262–Q322.

Belongs to the GATS family. In terms of assembly, may form homodimers and heterodimers.

It localises to the cytoplasm. The protein localises to the cytosol. Its function is as follows. Functions as a negative regulator of the TORC1 signaling pathway. This Xenopus laevis (African clawed frog) protein is Cytosolic arginine sensor for mTORC1 subunit 2.